The sequence spans 634 residues: Mitochondrial Rho GTPase 1 (634 aa).

Topologically, residues 1 to 604 (MLCCMRICVC…PRSEEDVEGK (604 aa)) are cytoplasmic. The Miro 1 domain occupies 2-171 (LCCMRICVCG…FFLCQKAVTH (170 aa)). GTP is bound by residues 11–18 (GDEGTGKS), 60–64 (DTSAV), and 116–119 (NKSD). 2 consecutive EF-hand domains span residues 187-222 (AAVAALQRIFYLSDKDRDGYLSDKEIKDFQMRCFEK) and 307-342 (EGYRFFVNLFLLSDKDNDGGLNDAELASLFAPTPGL). Residues Asp200, Asp202, Asp204, Tyr206, Glu211, Asp320, Asp322, Asp324, and Glu331 each coordinate Ca(2+). Residues 399–419 (NPSTTAALKVTRPRKRRKRPG) form a disordered region. Residues 409-419 (TRPRKRRKRPG) show a composition bias toward basic residues. Residues 423 to 589 (RNVVLGHIVG…FVHIAEAAME (167 aa)) form the Miro 2 domain. GTP is bound by residues 432–439 (GAPGSGKS), 468–472 (ELPGG), and 538–541 (LKAD). A helical; Anchor for type IV membrane protein membrane pass occupies residues 605–625 (WMSWGIALGAVVCAGAAAVMI). Topologically, residues 626–634 (WRRVSGSGV) are mitochondrial intermembrane.

This sequence belongs to the mitochondrial Rho GTPase family.

Its subcellular location is the mitochondrion outer membrane. In terms of biological role, mitochondrial GTPase involved in mitochondrial trafficking. Probably involved in control of anterograde transport of mitochondria and their subcellular distribution. In Emericella nidulans (strain FGSC A4 / ATCC 38163 / CBS 112.46 / NRRL 194 / M139) (Aspergillus nidulans), this protein is Mitochondrial Rho GTPase 1 (gem1).